Here is a 799-residue protein sequence, read N- to C-terminus: Mitochondrial intermediate peptidase (799 aa).

His-562 provides a ligand contact to Zn(2+). Residue Glu-563 is part of the active site. Positions 566 and 569 each coordinate Zn(2+).

The protein belongs to the peptidase M3 family. Zn(2+) is required as a cofactor.

The protein resides in the mitochondrion matrix. The enzyme catalyses Release of an N-terminal octapeptide as second stage of processing of some proteins imported into the mitochondrion.. Its function is as follows. Cleaves proteins, imported into the mitochondrion, to their mature size. While most mitochondrial precursor proteins are processed to the mature form in one step by mitochondrial processing peptidase (MPP), the sequential cleavage by MIP of an octapeptide after initial processing by MPP is a required step for a subgroup of nuclear-encoded precursor proteins destined for the matrix or the inner membrane. The polypeptide is Mitochondrial intermediate peptidase (oct1) (Aspergillus niger (strain ATCC MYA-4892 / CBS 513.88 / FGSC A1513)).